The chain runs to 176 residues: Peptide deformylase (176 aa).

Fe cation-binding residues include cysteine 100 and histidine 142. Glutamate 143 is a catalytic residue. A Fe cation-binding site is contributed by histidine 146.

Belongs to the polypeptide deformylase family. Fe(2+) serves as cofactor.

It carries out the reaction N-terminal N-formyl-L-methionyl-[peptide] + H2O = N-terminal L-methionyl-[peptide] + formate. In terms of biological role, removes the formyl group from the N-terminal Met of newly synthesized proteins. Requires at least a dipeptide for an efficient rate of reaction. N-terminal L-methionine is a prerequisite for activity but the enzyme has broad specificity at other positions. The polypeptide is Peptide deformylase (Elusimicrobium minutum (strain Pei191)).